A 341-amino-acid chain; its full sequence is Glucokinase (341 aa).

18-23 (GDIGGT) provides a ligand contact to ATP.

The protein belongs to the bacterial glucokinase family.

The protein resides in the cytoplasm. The catalysed reaction is D-glucose + ATP = D-glucose 6-phosphate + ADP + H(+). In Rhizobium leguminosarum bv. trifolii (strain WSM2304), this protein is Glucokinase.